The primary structure comprises 282 residues: Cell division protein FtsQ (282 aa).

Topologically, residues 1–30 (MINIGPPKKRRLRRKGNRFKKTRRVIPWRR) are cytoplasmic. Residues 31–51 (LMIGALWGTMALASLGMVVAV) form a helical membrane-spanning segment. Residues 52–282 (ACFAGQMLFA…LDAGELRGKG (231 aa)) are Periplasmic-facing. Positions 65–133 (FKVERIQVEN…DQLVIRVDER (69 aa)) constitute a POTRA domain.

It belongs to the FtsQ/DivIB family. FtsQ subfamily.

The protein resides in the cell inner membrane. Its function is as follows. Essential cell division protein. This chain is Cell division protein FtsQ, found in Syntrophotalea carbinolica (strain DSM 2380 / NBRC 103641 / GraBd1) (Pelobacter carbinolicus).